Reading from the N-terminus, the 209-residue chain is Ribosomal RNA large subunit methyltransferase E (209 aa).

The S-adenosyl-L-methionine site is built by Gly63, Trp65, Asp83, Asp99, and Asp124. Lys164 (proton acceptor) is an active-site residue.

Belongs to the class I-like SAM-binding methyltransferase superfamily. RNA methyltransferase RlmE family.

It localises to the cytoplasm. The catalysed reaction is uridine(2552) in 23S rRNA + S-adenosyl-L-methionine = 2'-O-methyluridine(2552) in 23S rRNA + S-adenosyl-L-homocysteine + H(+). Functionally, specifically methylates the uridine in position 2552 of 23S rRNA at the 2'-O position of the ribose in the fully assembled 50S ribosomal subunit. The polypeptide is Ribosomal RNA large subunit methyltransferase E (Serratia proteamaculans (strain 568)).